A 157-amino-acid chain; its full sequence is 2-C-methyl-D-erythritol 2,4-cyclodiphosphate synthase (157 aa).

A divalent metal cation contacts are provided by Asp8 and His10. Residues 8 to 10 and 34 to 35 contribute to the 4-CDP-2-C-methyl-D-erythritol 2-phosphate site; these read DVH and HS. His42 serves as a coordination point for a divalent metal cation. 4-CDP-2-C-methyl-D-erythritol 2-phosphate is bound by residues 56-58, 61-65, 100-106, 132-135, Phe139, and Arg142; these read DIG, FPDTD, AQAPKMA, and TTTE.

It belongs to the IspF family. In terms of assembly, homotrimer. A divalent metal cation serves as cofactor.

The catalysed reaction is 4-CDP-2-C-methyl-D-erythritol 2-phosphate = 2-C-methyl-D-erythritol 2,4-cyclic diphosphate + CMP. It functions in the pathway isoprenoid biosynthesis; isopentenyl diphosphate biosynthesis via DXP pathway; isopentenyl diphosphate from 1-deoxy-D-xylulose 5-phosphate: step 4/6. Involved in the biosynthesis of isopentenyl diphosphate (IPP) and dimethylallyl diphosphate (DMAPP), two major building blocks of isoprenoid compounds. Catalyzes the conversion of 4-diphosphocytidyl-2-C-methyl-D-erythritol 2-phosphate (CDP-ME2P) to 2-C-methyl-D-erythritol 2,4-cyclodiphosphate (ME-CPP) with a corresponding release of cytidine 5-monophosphate (CMP). The protein is 2-C-methyl-D-erythritol 2,4-cyclodiphosphate synthase of Pseudomonas fluorescens (strain ATCC BAA-477 / NRRL B-23932 / Pf-5).